Reading from the N-terminus, the 244-residue chain is MTQIIPALDLIDGEVVRLVKGDYEQKKVYKYNPLEKFKEYEKAGAKELHLVDLTGAKDPSKRQLALIEKLAKEVNVNLQVGGGIRSKEEVKALLDCGVKRVVIGSMAIKDATLCLEILKEFGSEAIVLALDTILKEDYVVAVNAWQEASDKKLMEVLDFYSNKGLKHILCTDISKDGTMQGVNVRLYKLIHEIFPNICIQASGGVASLKDLENLKGICSGVIVGKALLDGVFSVEEGIRCLQNA.

Asp-9 acts as the Proton acceptor in catalysis. The Proton donor role is filled by Asp-131.

The protein belongs to the HisA/HisF family.

It localises to the cytoplasm. It catalyses the reaction 1-(5-phospho-beta-D-ribosyl)-5-[(5-phospho-beta-D-ribosylamino)methylideneamino]imidazole-4-carboxamide = 5-[(5-phospho-1-deoxy-D-ribulos-1-ylimino)methylamino]-1-(5-phospho-beta-D-ribosyl)imidazole-4-carboxamide. It functions in the pathway amino-acid biosynthesis; L-histidine biosynthesis; L-histidine from 5-phospho-alpha-D-ribose 1-diphosphate: step 4/9. The polypeptide is 1-(5-phosphoribosyl)-5-[(5-phosphoribosylamino)methylideneamino] imidazole-4-carboxamide isomerase (Campylobacter jejuni subsp. jejuni serotype O:6 (strain 81116 / NCTC 11828)).